Reading from the N-terminus, the 298-residue chain is MFKSGFVAILGRPNVGKSTFLNHVMGQKIAIMSDKAQSTRNKIMGIYTTETEQIVFIDTPGIHKPKTALGDFMVESAYSTLREVETVLFMVPADEKRGKGDDMIIERLKAARIPVILVINKIDKVHPDQLLEQIDDFRSQMDFKEIVPISALQGNNVETLVQLLKDNLEEGFQYFPEDQITDHPERFLVSEMVREKVLHLTQQEVPHSVAVVVDSMKRDEVTDKVHIRVTIMVERDSQKGIIIGKQGAMLKKIGKLARRDIELMLGDKVYLETWVKVKKNWRDKKLDLADFGYNQKEY.

One can recognise an Era-type G domain in the interval Lys-3–Glu-170. The segment at Gly-11–Ser-18 is G1. Gly-11–Ser-18 contributes to the GTP binding site. A G2 region spans residues Gln-37–Asn-41. Residues Asp-58–Gly-61 form a G3 region. Residues Asp-58–Ile-62 and Asn-120–Asp-123 contribute to the GTP site. Positions Asn-120–Asp-123 are G4. Residues Ile-149–Ala-151 are G5. Residues Thr-201 to Lys-279 form the KH type-2 domain.

This sequence belongs to the TRAFAC class TrmE-Era-EngA-EngB-Septin-like GTPase superfamily. Era GTPase family. In terms of assembly, monomer.

It localises to the cytoplasm. The protein localises to the cell membrane. Its function is as follows. An essential GTPase that binds both GDP and GTP, with rapid nucleotide exchange. Plays a role in 16S rRNA processing and 30S ribosomal subunit biogenesis and possibly also in cell cycle regulation and energy metabolism. This is GTPase Era from Streptococcus equi subsp. zooepidemicus (strain H70).